Consider the following 322-residue polypeptide: Eukaryotic translation initiation factor 3 subunit I (322 aa).

WD repeat units lie at residues 4–43 (GHER…RLGT), 46–85 (GHQG…VIAS), 141–180 (MTES…KVVD), 184–223 (DHSA…CLKS), and 281–322 (GHFG…NIFE).

The protein belongs to the eIF-3 subunit I family. Component of the eukaryotic translation initiation factor 3 (eIF-3) complex. The eIF-3 complex interacts with pix.

The protein localises to the cytoplasm. Functionally, component of the eukaryotic translation initiation factor 3 (eIF-3) complex, which is involved in protein synthesis of a specialized repertoire of mRNAs and, together with other initiation factors, stimulates binding of mRNA and methionyl-tRNAi to the 40S ribosome. The eIF-3 complex specifically targets and initiates translation of a subset of mRNAs involved in cell proliferation. This is Eukaryotic translation initiation factor 3 subunit I from Drosophila yakuba (Fruit fly).